Consider the following 645-residue polypeptide: Macrolide export ATP-binding/permease protein MacB (645 aa).

The ABC transporter domain maps to 6–244 (IELEGIRRSY…SSIAVVPWQA (239 aa)). Position 42 to 49 (42 to 49 (GASGSGKS)) interacts with ATP. 4 helical membrane passes run 274 to 294 (ALTLSGIVIGVASVVAMMAIG), 526 to 546 (IAAISMLVGGIGIMNIMLITV), 574 to 594 (AVVLAAIGGVVGLLLGAVIGV), and 596 to 616 (AALLFGMTVIFSVTMALGALM).

The protein belongs to the ABC transporter superfamily. Macrolide exporter (TC 3.A.1.122) family. In terms of assembly, homodimer.

It is found in the cell inner membrane. In terms of biological role, non-canonical ABC transporter that contains transmembrane domains (TMD), which form a pore in the inner membrane, and an ATP-binding domain (NBD), which is responsible for energy generation. Confers resistance against macrolides. This Nitrobacter winogradskyi (strain ATCC 25391 / DSM 10237 / CIP 104748 / NCIMB 11846 / Nb-255) protein is Macrolide export ATP-binding/permease protein MacB.